The following is a 98-amino-acid chain: Prostate and testis expressed protein 3 (98 aa).

Residues 1-20 form the signal peptide; it reads MNKHFLFLFLLYCLIVAVTS. In terms of domain architecture, UPAR/Ly6 spans 21-97; that stretch reads LQCITCHLRT…CCNYNYCNFK (77 aa). Cystine bridges form between cysteine 23–cysteine 50, cysteine 26–cysteine 35, cysteine 42–cysteine 68, and cysteine 72–cysteine 88.

This sequence belongs to the PATE family. In terms of tissue distribution, specifically expressed in prostate and testis.

It localises to the secreted. In Homo sapiens (Human), this protein is Prostate and testis expressed protein 3 (PATE3).